The following is an 894-amino-acid chain: MAMASSRNGAVRGSMRPVSGANSSNLRSSSFKSRIPSSAPAPRRSSSASIGAADNGVPGRVRVAVRLRPRNADESVADADFADCVELQPELKRLKLRKNNWDTETYEFDEVLTEAASQKRVYEVVAKPVVESVLEGYNGTVMAYGQTGTGKTFTLGRLGDEDTAARGIMVRSMEDIIGGTSLDTDSISVSYLQLYMETIQDLLDPTNDNIAIVEDPRTGDVSLPGATHVEIRNQQNFLELLQLGETHRVAANTKLNTESSRSHAILMVHVKRSVVENEFPVSNEMESSSHFVRPSKPLVRRSKLVLVDLAGSERVHKSGSEGHMLEEAKSINLSLSALGKCINAIAENSPHVPLRDSKLTRLLRDSFGGTARTSLIVTIGPSPRHRGETTSTILFGQRAMKVENMLKIKEEFDYKSLSKKLEVQLDKVIAENERQLKAFDDDVERINRQAQNRISEVEKNFAEALEKEKLKCQMEYMESVKKLEEKLISNQRNHENGKRNGEVNGVVTASEFTRLKESLENEMKLRKSAEEEVSKVKSQSTLKTRSGEGEDAGITRLQKLLEDEALQKKKLEEEVTILRSQLVQLTFEADQMRRCLDRGAPGNSYSGTDSLPSRHSQARESVNGQKAPFATLCEQVGLQKILQLLESDDANIRIHAVKVVANLAAEEANQEKIVEAGGLTSLLMLLRSYEDETVRRVAAGAIANLAMNEVSQQLIVDQGGISLLSLTAADAEDPQTLRMVAGAIANLCGNDKLQARLWSDGGIKALLGMVRCGHPDVLAQVARGIANFAKCESRATTQGVKSGRSLLIEDGALPWIVQHANDEAAPIRRHIELALCHLAQHEVNAKEMISGGALWELVRISKECSREDIRSLAHRTLSSSPVFRSEIRRLGIQF.

Positions 1 to 53 (MAMASSRNGAVRGSMRPVSGANSSNLRSSSFKSRIPSSAPAPRRSSSASIGAA) are disordered. Over residues 19 to 50 (SGANSSNLRSSSFKSRIPSSAPAPRRSSSASI) the composition is skewed to low complexity. The 343-residue stretch at 60–402 (RVRVAVRLRP…ILFGQRAMKV (343 aa)) folds into the Kinesin motor domain. 145–152 (GQTGTGKT) is an ATP binding site. Positions 372–380 (RTSLIVTIG) match the D-BOX motif. The stretch at 423-588 (VQLDKVIAEN…RSQLVQLTFE (166 aa)) forms a coiled coil. Disordered stretches follow at residues 530 to 550 (EEEV…GEGE) and 598 to 623 (RGAP…ESVN). A compositionally biased stretch (polar residues) spans 603–623 (NSYSGTDSLPSRHSQARESVN). ARM repeat units lie at residues 626 to 665 (KAPF…NLAA), 667 to 707 (EANQ…NLAM), 709 to 749 (EVSQ…NLCG), and 751 to 790 (DKLQ…NFAK).

Belongs to the TRAFAC class myosin-kinesin ATPase superfamily. Kinesin family. Ungrouped subfamily. As to quaternary structure, interacts (via C-terminus) with NEK5. Expressed in the basal regions and petioles of immature leaves and in the root elongation zone.

The protein localises to the cytoplasm. It is found in the cytoskeleton. Involved in the control of epidermal-cell morphogenesis in roots and helical growth of roots by promoting microtubule depolymerization and limiting the accumulation of endoplasmic microtubules. Seems to be involved in the control of cell-file rotation (or twisting). The sequence is that of Kinesin-like protein KIN-UB from Arabidopsis thaliana (Mouse-ear cress).